Here is a 272-residue protein sequence, read N- to C-terminus: Ribosomal RNA large subunit methyltransferase E (272 aa).

S-adenosyl-L-methionine contacts are provided by Gly-50, Trp-52, Asp-68, Asp-84, and Asp-109. The active-site Proton acceptor is the Lys-149. The 59-residue stretch at 196–254 (PLRRGDKFVVDIEKLGSGGDGAVLIEGFVVFVKEVEVGEKVRIKIADVKPNFAFADVEE) folds into the TRAM domain.

The protein belongs to the class I-like SAM-binding methyltransferase superfamily. RNA methyltransferase RlmE family.

The protein resides in the cytoplasm. The enzyme catalyses uridine(2552) in 23S rRNA + S-adenosyl-L-methionine = 2'-O-methyluridine(2552) in 23S rRNA + S-adenosyl-L-homocysteine + H(+). Specifically methylates the uridine in position 2552 of 23S rRNA at the 2'-O position of the ribose in the fully assembled 50S ribosomal subunit. The polypeptide is Ribosomal RNA large subunit methyltransferase E (Methanosarcina acetivorans (strain ATCC 35395 / DSM 2834 / JCM 12185 / C2A)).